Consider the following 388-residue polypeptide: MNLHEYQAKQLFAEFGLPVPEGYACDTPQEAFEAAGRISTAKKVVKCQVHAGGRGKAGGVELHDTKEGVKAFAQKWLGKNLVTYQTDANGQPVSKILVEEASNIANELYLGAVVDRSTRRIVFMASTEGGVEIEKVAEETPELIHKAAIDPLVGPQAYQGRELAFKLGLQGDQIKQFVKIFMGLGEMFAQYDLALLEINPLVITAEGNLLCLDGKINIDSNAMYRQPKLRQMHDASQEDAREAHAAKWELNYVALDGNVGCMVNGAGLAMGTMDIVNLHGGKPANFLDVGGGATKERVAEAFKIILSDTNVKAVLVNIFGGIVRCDMIAEGIIGAVKEVGVSVPVVVRLEGTNAELGRKVLAESGLDIIAAVSLTDAAQKVVAAAEGK.

The ATP-grasp domain maps to 9–244 (KQLFAEFGLP…ASQEDAREAH (236 aa)). Residues Lys-46, 53 to 55 (GRG), Glu-99, Ser-102, and Glu-107 each bind ATP. Mg(2+)-binding residues include Asn-199 and Asp-213. Substrate-binding positions include Asn-264 and 321–323 (GIV).

Belongs to the succinate/malate CoA ligase beta subunit family. As to quaternary structure, heterotetramer of two alpha and two beta subunits. The cofactor is Mg(2+).

It carries out the reaction succinate + ATP + CoA = succinyl-CoA + ADP + phosphate. The enzyme catalyses GTP + succinate + CoA = succinyl-CoA + GDP + phosphate. It participates in carbohydrate metabolism; tricarboxylic acid cycle; succinate from succinyl-CoA (ligase route): step 1/1. Succinyl-CoA synthetase functions in the citric acid cycle (TCA), coupling the hydrolysis of succinyl-CoA to the synthesis of either ATP or GTP and thus represents the only step of substrate-level phosphorylation in the TCA. The beta subunit provides nucleotide specificity of the enzyme and binds the substrate succinate, while the binding sites for coenzyme A and phosphate are found in the alpha subunit. This chain is Succinate--CoA ligase [ADP-forming] subunit beta, found in Vibrio cholerae serotype O1 (strain ATCC 39541 / Classical Ogawa 395 / O395).